A 493-amino-acid chain; its full sequence is Endothelial lipase (493 aa).

Positions 1–23 (MRDPVFLLGFWSLYCCFPAGSLT) are cleaved as a signal peptide. Cysteine 66 and cysteine 79 are disulfide-bonded. 2 N-linked (GlcNAc...) asparagine glycosylation sites follow: asparagine 67 and asparagine 82. The active-site Nucleophile is the serine 171. Catalysis depends on aspartate 195, which acts as the Charge relay system. Cysteine 254 and cysteine 274 are disulfide-bonded. Histidine 276 serves as the catalytic Charge relay system. 2 disulfides stabilise this stretch: cysteine 299–cysteine 318 and cysteine 310–cysteine 313. 327–339 (KMRKKRNSKMYLK) provides a ligand contact to heparin. The 136-residue stretch at 349 to 484 (YHYQLKVHMF…SPGQELWFYK (136 aa)) folds into the PLAT domain. A glycan (N-linked (GlcNAc...) asparagine) is linked at asparagine 395. A disulfide bridge connects residues cysteine 465 and cysteine 485.

The protein belongs to the AB hydrolase superfamily. Lipase family. In terms of assembly, head to tail Homodimer. Interacts with apolipoprotein C-2.

Its subcellular location is the secreted. It carries out the reaction a triacylglycerol + H2O = a diacylglycerol + a fatty acid + H(+). The enzyme catalyses a 1,2-diacyl-sn-glycero-3-phosphocholine + H2O = a 2-acyl-sn-glycero-3-phosphocholine + a fatty acid + H(+). It catalyses the reaction 1,2,3-tri-(9Z-octadecenoyl)-glycerol + H2O = di-(9Z)-octadecenoylglycerol + (9Z)-octadecenoate + H(+). The catalysed reaction is 1,2,3-tributanoylglycerol + H2O = dibutanoylglycerol + butanoate + H(+). It carries out the reaction 1,2-dihexadecanoyl-sn-glycero-3-phosphocholine + H2O = hexadecanoyl-sn-glycero-3-phosphocholine + hexadecanoate + H(+). Exerts both phospholipase and triglyceride lipase activities. More active as a phospholipase than a triglyceride lipase. Hydrolyzes triglycerides, both with short-chain fatty acyl groups (tributyrin) and long-chain fatty acyl groups (triolein) with similar levels of activity toward both types of substrates. Hydrolyzes high density lipoproteins (HDL) more efficiently than other lipoproteins. The protein is Endothelial lipase (Lipg) of Rattus norvegicus (Rat).